We begin with the raw amino-acid sequence, 458 residues long: MTFRKSFDCYDFYDRAKVGEKCTQDDWDLMKIPMKAMELKQKYGLDFKGEFIPTDKDMMEKLFKAGFEMLLECGIYCTDTHRIVKYTEDEIWDAINNVQKEFVLGTGRDAVNVKKRSVGDKAKPIVQGGPTGSPISEDVFMPVHMSYALEKEVDTIVNGVMTSVRGKAPVPKSPYEVLAAKTETRLIKNACAMAGRPGMGVOGPETSLSAQGNISADCAGGMTCTDSHEVSQLNELKIDLDAISVIAHYKGNSDIIMDEQMPIFGGYAGGIEETTIVDVATHINAVIMSSASWHLDGPVHIRWGSTNTRETLTIAGWACATISEFTDILSGNQYYPCAGPCTEMCLLEASAQSITDTASGREILSGVASAKGVVTDKTTGMEARMMGEVARATAGVEISEVNVILDKLVALYEKNYASAPAGKTFQECYDVKTVTPTEEYMQVYDGARKKLEDLGLVF.

A non-standard amino acid (pyrrolysine) is located at residue Pyl202.

It belongs to the monomethylamine methyltransferase family.

The catalysed reaction is Co(I)-[methylamine-specific corrinoid protein] + methylamine + H(+) = methyl-Co(III)-[methylamine-specific corrinoid protein] + NH4(+). The protein operates within one-carbon metabolism; methanogenesis from methylamine. Catalyzes the transfer of the methyl group from monomethylamine to the corrinoid cofactor of MtmC. The sequence is that of Monomethylamine methyltransferase MtmB1 (mtmB1) from Methanosarcina barkeri (strain Fusaro / DSM 804).